The sequence spans 107 residues: Metallothionein-1 (107 aa).

Residues 1 to 2 (MD) constitute a propeptide that is removed on maturation.

It belongs to the metallothionein superfamily. Type 7 family.

Its function is as follows. The metallothioneins are involved in the cellular sequestration of toxic metal ions. Binds 12 cadmium ions per molecule. This chain is Metallothionein-1, found in Tetrahymena pigmentosa.